Here is a 454-residue protein sequence, read N- to C-terminus: Elongation factor Tu, mitochondrial (454 aa).

A mitochondrion-targeting transit peptide spans 1–51 (MASVVLRNPSSKRLVPFSSQIYSRCGASVTSSYSISHSIGGDDLSSSTFGT). Positions 65 to 261 (KPHVNVGTIG…AVDEYIPDPV (197 aa)) constitute a tr-type G domain. The segment at 74-81 (GHVDHGKT) is G1. 74 to 81 (GHVDHGKT) is a binding site for GTP. T82 is modified (phosphothreonine). The interval 115–119 (GITIA) is G2. Residues 136–139 (DCPG) form a G3 region. GTP is bound by residues 136 to 140 (DCPGH) and 191 to 194 (NKVD). Residues 191-194 (NKVD) form a G4 region. Positions 229 to 231 (SAL) are G5.

Belongs to the TRAFAC class translation factor GTPase superfamily. Classic translation factor GTPase family. EF-Tu/EF-1A subfamily.

It localises to the mitochondrion. This protein promotes the GTP-dependent binding of aminoacyl-tRNA to the A-site of ribosomes during protein biosynthesis. The protein is Elongation factor Tu, mitochondrial (TUFA) of Arabidopsis thaliana (Mouse-ear cress).